Here is a 616-residue protein sequence, read N- to C-terminus: Chaperone protein DnaK (616 aa).

Residue Thr175 is modified to Phosphothreonine; by autocatalysis. The disordered stretch occupies residues 579–616; the sequence is GGDPSQAGGFDPNAAGGAQQEPHDDNVVDADFKVDDDK. Basic and acidic residues predominate over residues 599–616; the sequence is EPHDDNVVDADFKVDDDK.

It belongs to the heat shock protein 70 family.

In terms of biological role, acts as a chaperone. The protein is Chaperone protein DnaK of Clostridium botulinum (strain Eklund 17B / Type B).